The following is a 149-amino-acid chain: uncharacterized protein (149 aa).

Ser-21 is modified (phosphoserine). 2 consecutive transmembrane segments (helical) span residues 48-68 (FMEFAVGSIVYSFGVPGWVLG) and 72-92 (VLAAGFLVMFLFLVWPCFQLV). Residues 116 to 149 (AEEVPPPSYPSLEEENEGNEEIEESEEMNTLLSK) are disordered. Residues 127–142 (LEEENEGNEEIEESEE) are compositionally biased toward acidic residues.

The protein localises to the membrane. This is an uncharacterized protein from Schizosaccharomyces pombe (strain 972 / ATCC 24843) (Fission yeast).